We begin with the raw amino-acid sequence, 983 residues long: Anion exchange protein 4 (983 aa).

Residues 1-48 (MEMKLPGQEGFEASSAPRNIPSGELDSNPDPGTGPSPDGPSDTESKEL) are disordered. An N-linked (GlcNAc...) asparagine glycan is attached at Asn-183. 2 disordered regions span residues 186-205 (TGTRPCWGSTHPRKASDNEE) and 332-357 (RIPPPKCLPSQHKRLPSQQREIRGPA). A run of 4 helical transmembrane segments spans residues 415–435 (AVLYIYLATVTNAITFGGLLG), 443–463 (GVLESFLGTAVAGAAFCLMAG), 500–520 (VGIWVATFCLVLVATEASVLV), and 530–550 (GFCALISLIFIYDAVGKMLNL). The segment at 415 to 983 (AVLYIYLATV…KAPEINISVN (569 aa)) is membrane (anion exchange). Residues Asn-576 and Asn-600 are each glycosylated (N-linked (GlcNAc...) asparagine). 7 helical membrane-spanning segments follow: residues 624 to 644 (VPDIAFFSLLLFLTSFFFAMA), 665 to 685 (FSSVLAILLGCGLDAFLGLAT), 712 to 732 (PWWWSVAAALPALLLSILIFM), 758 to 778 (LFCVAVLMLLTSALGLPWYVS), 815 to 835 (GLVVFILTGASIFLAPVLKFI), 837 to 857 (MPVLYGIFLYMGVAALSSIQF), and 899 to 919 (LWIIKSTPAAIIFPLMLLGLV). The span at 946–957 (RSIPEKGLEPEH) shows a compositional bias: basic and acidic residues. The interval 946–983 (RSIPEKGLEPEHSFSGSDSEDSELMYQPKAPEINISVN) is disordered. Asn-979 is a glycosylation site (N-linked (GlcNAc...) asparagine).

Belongs to the anion exchanger (TC 2.A.31) family. As to expression, kidney specific.

The protein localises to the basolateral cell membrane. It catalyses the reaction 2 hydrogencarbonate(out) + chloride(in) + Na(+)(out) = 2 hydrogencarbonate(in) + chloride(out) + Na(+)(in). It carries out the reaction K(+)(in) + 2 hydrogencarbonate(in) + chloride(out) = K(+)(out) + 2 hydrogencarbonate(out) + chloride(in). The enzyme catalyses Li(+)(in) + 2 hydrogencarbonate(in) + chloride(out) = Li(+)(out) + 2 hydrogencarbonate(out) + chloride(in). The catalysed reaction is Rb(+)(in) + 2 hydrogencarbonate(in) + chloride(out) = Rb(+)(out) + 2 hydrogencarbonate(out) + chloride(in). It catalyses the reaction Cs(+)(in) + 2 hydrogencarbonate(in) + chloride(out) = Cs(+)(out) + 2 hydrogencarbonate(out) + chloride(in). Its function is as follows. Electroneutral Cl(-)/HCO3(-) antiporter that favors chloride ion entry and efflux of hydrogencarbonate and sodium ion across the basolateral membrane and may participate in salivary secretion. Also mediates Cl(-)/HCO3(-) exchange activity in the presence of K(+) as well as Cs(+), Li(+), and Rb(+). Does not contribute to Cl(-)/HCO3(-) exchanger in the apical membrane of the upper villous epithelium. This Homo sapiens (Human) protein is Anion exchange protein 4.